Consider the following 553-residue polypeptide: Glutamate--tRNA ligase (553 aa).

A 'HIGH' region motif is present at residues 98–108 (PNPSGPLHIGH).

It belongs to the class-I aminoacyl-tRNA synthetase family. Glutamate--tRNA ligase type 2 subfamily.

It is found in the cytoplasm. The enzyme catalyses tRNA(Glu) + L-glutamate + ATP = L-glutamyl-tRNA(Glu) + AMP + diphosphate. Functionally, catalyzes the attachment of glutamate to tRNA(Glu) in a two-step reaction: glutamate is first activated by ATP to form Glu-AMP and then transferred to the acceptor end of tRNA(Glu). This is Glutamate--tRNA ligase from Methanocaldococcus jannaschii (strain ATCC 43067 / DSM 2661 / JAL-1 / JCM 10045 / NBRC 100440) (Methanococcus jannaschii).